A 289-amino-acid chain; its full sequence is Agmatinase (289 aa).

Mn(2+)-binding residues include His112, Asp135, His137, Asp139, Asp216, and Asp218.

It belongs to the arginase family. Agmatinase subfamily. The cofactor is Mn(2+).

It carries out the reaction agmatine + H2O = urea + putrescine. It participates in amine and polyamine biosynthesis; putrescine biosynthesis via agmatine pathway; putrescine from agmatine: step 1/1. Its function is as follows. Catalyzes the formation of putrescine from agmatine. The polypeptide is Agmatinase (speB) (Halalkalibacterium halodurans (strain ATCC BAA-125 / DSM 18197 / FERM 7344 / JCM 9153 / C-125) (Bacillus halodurans)).